Consider the following 361-residue polypeptide: PTI1-like tyrosine-protein kinase 1 (361 aa).

The segment at 16–43 is disordered; it reads EEQQLKSSQQQSDANHKNSKPAPVAKHE. The 283-residue stretch at 68-350 folds into the Protein kinase domain; it reads FGSKALIGEG…IVVKALQPLL (283 aa). Residues 74–82 and K96 contribute to the ATP site; that span reads IGEGSYGRV. D200 acts as the Proton acceptor in catalysis.

It belongs to the protein kinase superfamily. Tyr protein kinase family. Interacts with OXI1. In terms of processing, autophosphorylated and phosphorylated by OXI1.

The protein resides in the cell membrane. It catalyses the reaction L-tyrosyl-[protein] + ATP = O-phospho-L-tyrosyl-[protein] + ADP + H(+). This chain is PTI1-like tyrosine-protein kinase 1 (PTI11), found in Arabidopsis thaliana (Mouse-ear cress).